A 208-amino-acid chain; its full sequence is Recombination protein RecR (208 aa).

The segment at cysteine 60 to cysteine 75 adopts a C4-type zinc-finger fold. A Toprim domain is found at serine 83–serine 178.

The protein belongs to the RecR family.

In terms of biological role, may play a role in DNA repair. It seems to be involved in an RecBC-independent recombinational process of DNA repair. It may act with RecF and RecO. The chain is Recombination protein RecR from Parabacteroides distasonis (strain ATCC 8503 / DSM 20701 / CIP 104284 / JCM 5825 / NCTC 11152).